We begin with the raw amino-acid sequence, 65 residues long: Large ribosomal subunit protein bL35 (65 aa).

The protein belongs to the bacterial ribosomal protein bL35 family.

This chain is Large ribosomal subunit protein bL35, found in Stenotrophomonas maltophilia (strain R551-3).